The primary structure comprises 473 residues: ATP synthase subunit beta (473 aa).

158 to 165 (GGAGVGKT) is a binding site for ATP.

This sequence belongs to the ATPase alpha/beta chains family. In terms of assembly, F-type ATPases have 2 components, CF(1) - the catalytic core - and CF(0) - the membrane proton channel. CF(1) has five subunits: alpha(3), beta(3), gamma(1), delta(1), epsilon(1). CF(0) has three main subunits: a(1), b(2) and c(9-12). The alpha and beta chains form an alternating ring which encloses part of the gamma chain. CF(1) is attached to CF(0) by a central stalk formed by the gamma and epsilon chains, while a peripheral stalk is formed by the delta and b chains.

Its subcellular location is the cell membrane. It catalyses the reaction ATP + H2O + 4 H(+)(in) = ADP + phosphate + 5 H(+)(out). Produces ATP from ADP in the presence of a proton gradient across the membrane. The catalytic sites are hosted primarily by the beta subunits. The chain is ATP synthase subunit beta from Geobacillus thermodenitrificans (strain NG80-2).